The following is a 134-amino-acid chain: Calcitonin gene-related peptide 2 (134 aa).

Residues 1–26 (MDFWKFFPFLALSSMWVLCLASSLQA) form the signal peptide. Positions 27-86 (APFRSALESSLDLGTLSDQEKHLLLAALIQDYEQKARKLEQEEQETEGSRKGSSSSVISQ) are excised as a propeptide. Positions 65 to 91 (LEQEEQETEGSRKGSSSSVISQKRSCN) are disordered. Low complexity predominate over residues 77-89 (KGSSSSVISQKRS). Residues Cys-90 and Cys-95 are joined by a disulfide bond. A Phenylalanine amide modification is found at Phe-125. Residues 131-134 (DLRV) constitute a propeptide that is removed on maturation.

Belongs to the calcitonin family.

Its subcellular location is the secreted. CALCB/CGRP2 is a peptide hormone that induces vasodilation mediated by the CALCRL-RAMP1 receptor complex. Dilates a variety of vessels including the coronary, cerebral and systemic vasculature. Its abundance in the CNS also points toward a neurotransmitter or neuromodulator role. This chain is Calcitonin gene-related peptide 2, found in Rattus norvegicus (Rat).